The chain runs to 357 residues: Outer membrane protein YedS (357 aa).

An N-terminal signal peptide occupies residues 1-21 (MKRKVLAMLVPALLVAGAANA).

It belongs to the Gram-negative porin family.

Its subcellular location is the cell outer membrane. Functionally, forms pores that allow passive diffusion of small molecules across the outer membrane. Plays a role in resistance to carbapenems; this carbapenem-resistant, noncarbapenemase-producing clinical isolate has a deletion in ompF and a mutated marR gene that does not induce expression of this protein. However if this gene is overexpressed, or if wild-type marR is introduced, this leads to decreased resistance to the carbapenem antibiotics ertapenem, imipenem and meropenem. This chain is Outer membrane protein YedS, found in Escherichia coli.